A 216-amino-acid polypeptide reads, in one-letter code: Probable Golgi SNAP receptor complex member 2 (216 aa).

Residues 1-194 (MESLYHQTNN…IERRLVEDRR (194 aa)) lie on the Cytoplasmic side of the membrane. Positions 62-103 (QRQSSKLRVDQLKYDLRHLQTSLQTARERRQRRMQEISEREQ) form a coiled coil. A helical; Anchor for type IV membrane protein transmembrane segment spans residues 195 to 215 (IFIGGVVVTLLIIALIIYFLV). A topological domain (vesicular) is located at residue L216.

The protein belongs to the GOSR2 family. Part of a unique SNARE complex.

Its subcellular location is the golgi apparatus. The protein localises to the cis-Golgi network membrane. The protein resides in the golgi apparatus membrane. It is found in the endoplasmic reticulum membrane. In terms of biological role, involved in transport of proteins from the cis/medial-Golgi to the trans-Golgi network. This chain is Probable Golgi SNAP receptor complex member 2, found in Drosophila melanogaster (Fruit fly).